The following is a 127-amino-acid chain: MORF4 family-associated protein 1 (127 aa).

The segment at 76 to 97 is disordered; that stretch reads ESALNHLQNPDDGAEGRGTKRC. Residues 92-126 are a coiled coil; sequence RGTKRCEKAEEKAKEIAKMAEMLVELVRRIEKSES.

This sequence belongs to the MORF4 family-associated protein family. Found in a complex composed of MORF4L1, MRFAP1 and RB1. Interacts via its N-terminus with MORF4L1. Interacts with CSTB and MORF4L2.

It is found in the nucleus. Its subcellular location is the cytoplasm. The protein localises to the perinuclear region. This is MORF4 family-associated protein 1 from Bos taurus (Bovine).